Consider the following 915-residue polypeptide: Alanine--tRNA ligase (915 aa).

Positions 609, 613, 712, and 716 each coordinate Zn(2+).

Belongs to the class-II aminoacyl-tRNA synthetase family. Zn(2+) is required as a cofactor.

The protein resides in the cytoplasm. The catalysed reaction is tRNA(Ala) + L-alanine + ATP = L-alanyl-tRNA(Ala) + AMP + diphosphate. Its function is as follows. Catalyzes the attachment of alanine to tRNA(Ala) in a two-step reaction: alanine is first activated by ATP to form Ala-AMP and then transferred to the acceptor end of tRNA(Ala). Also edits incorrectly charged Ser-tRNA(Ala) and Gly-tRNA(Ala) via its editing domain. This is Alanine--tRNA ligase from Methanoculleus marisnigri (strain ATCC 35101 / DSM 1498 / JR1).